The chain runs to 736 residues: Exo-oligoalginate lyase (736 aa).

Positions 1 to 23 (MLSVNTIKNTLLAAVLVSVPATA) are cleaved as a signal peptide. Substrate is bound by residues K136, 146–149 (QSLN), K198, H202, and 257–260 (YYQR). Y258 serves as the catalytic Proton donor. H413 functions as the Proton acceptor in the catalytic mechanism. Residues H415 and D433 each contribute to the Zn(2+) site. R438 provides a ligand contact to substrate. H464 provides a ligand contact to Zn(2+). E667 lines the substrate pocket.

It belongs to the polysaccharide lyase 17 family. Homodimer. The cofactor is Zn(2+).

The protein localises to the periplasm. The catalysed reaction is Cleavage of 4-deoxy-alpha-L-erythro-hex-4-enopyranuronoside oligosaccharides into 4-deoxy-alpha-L-erythro-hex-4-enopyranuronate monosaccharides.. Catalyzes the depolymerization of alginate through an exolytic mode of action, via a beta-elimination mechanism. Preferentially acts on oligoalginates with degrees of polymerization higher than 2 to produce the alginate monomer, 4-deoxy-L-erythro-5-hexoseulose uronic acid. The protein is Exo-oligoalginate lyase of Saccharophagus degradans (strain 2-40 / ATCC 43961 / DSM 17024).